Reading from the N-terminus, the 648-residue chain is Calpain-5 (648 aa).

A Calpain catalytic domain is found at 28 to 353 (PFVDTLFPPT…FTDISLCQLF (326 aa)). Active-site residues include C83, H252, and N290. The tract at residues 354-509 (NTSVFSFSRS…VYSDEHIHFS (156 aa)) is domain III. One can recognise a C2 domain in the interval 502–625 (SDEHIHFSPL…ENRDTTLQLT (124 aa)).

The protein belongs to the peptidase C2 family. Ca(2+) serves as cofactor. In terms of tissue distribution, expressed in neuronal, but not in GABA-ergic neurons, intestinal, hypodermal and excretory tissues.

Its function is as follows. Required for the correct female sexual development of the soma and germline in hermaphrodite animals, while being fully dispensable in males. Has calcium-dependent proteolytic activity and is involved in the cleavage of tra-2, for which it acts as a potentiator. Capable of calcium-dependent autolysis. Part of the necrosis cell death pathway. Required for necrosis of intestinal cells induced by B.thuringiensis endotoxin Cry6Aa. In Caenorhabditis elegans, this protein is Calpain-5.